An 806-amino-acid chain; its full sequence is Phosphatidylinositol 4-kinase beta (806 aa).

Positions 55–247 constitute a PIK helical domain; that stretch reads LDKVKLIRGS…GTKLRKLILS (193 aa). 2 disordered regions span residues 69–104 and 253–310; these read LDKIDGSDTGDGGSLANGDAGPRHSESCGPPVSASR and AHKK…DEPV. Residues 283-302 show a composition bias toward polar residues; sequence DATVSISLSSNLKRTSSNPK. The 267-residue stretch at 525-791 folds into the PI3K/PI4K catalytic domain; sequence EPWQEKVRRI…MVDGSMRSIT (267 aa). Residues 531–537 form a G-loop region; the sequence is VRRIREG. The interval 658-666 is catalytic loop; the sequence is QVKDRHNGN. Positions 677-701 are activation loop; the sequence is HIDFGFILSSSPRNLGFETSAFKLT.

The protein belongs to the PI3/PI4-kinase family. Type III PI4K subfamily. The cofactor is Mg(2+). Requires Mn(2+) as cofactor.

It localises to the endomembrane system. Its subcellular location is the mitochondrion outer membrane. The protein resides in the rough endoplasmic reticulum membrane. It carries out the reaction a 1,2-diacyl-sn-glycero-3-phospho-(1D-myo-inositol) + ATP = a 1,2-diacyl-sn-glycero-3-phospho-(1D-myo-inositol 4-phosphate) + ADP + H(+). Functionally, phosphorylates phosphatidylinositol (PI) in the first committed step in the production of the second messenger inositol-1,4,5,-trisphosphate (PIP). May play an important role in the inner ear development. The chain is Phosphatidylinositol 4-kinase beta (pi4kb) from Xenopus tropicalis (Western clawed frog).